Consider the following 397-residue polypeptide: Dual-specificity RNA methyltransferase RlmN (397 aa).

Catalysis depends on E120, which acts as the Proton acceptor. The Radical SAM core domain occupies 126–369 (ETDRGTLCVS…VRTPRGRDIL (244 aa)). Residues C133 and C372 are joined by a disulfide bond. C140, C144, and C147 together coordinate [4Fe-4S] cluster. S-adenosyl-L-methionine-binding positions include 198-199 (GE), S230, 252-254 (SLH), and N329. Catalysis depends on C372, which acts as the S-methylcysteine intermediate.

This sequence belongs to the radical SAM superfamily. RlmN family. The cofactor is [4Fe-4S] cluster.

Its subcellular location is the cytoplasm. The catalysed reaction is adenosine(2503) in 23S rRNA + 2 reduced [2Fe-2S]-[ferredoxin] + 2 S-adenosyl-L-methionine = 2-methyladenosine(2503) in 23S rRNA + 5'-deoxyadenosine + L-methionine + 2 oxidized [2Fe-2S]-[ferredoxin] + S-adenosyl-L-homocysteine. The enzyme catalyses adenosine(37) in tRNA + 2 reduced [2Fe-2S]-[ferredoxin] + 2 S-adenosyl-L-methionine = 2-methyladenosine(37) in tRNA + 5'-deoxyadenosine + L-methionine + 2 oxidized [2Fe-2S]-[ferredoxin] + S-adenosyl-L-homocysteine. In terms of biological role, specifically methylates position 2 of adenine 2503 in 23S rRNA and position 2 of adenine 37 in tRNAs. m2A2503 modification seems to play a crucial role in the proofreading step occurring at the peptidyl transferase center and thus would serve to optimize ribosomal fidelity. This Nitrobacter winogradskyi (strain ATCC 25391 / DSM 10237 / CIP 104748 / NCIMB 11846 / Nb-255) protein is Dual-specificity RNA methyltransferase RlmN.